Reading from the N-terminus, the 191-residue chain is Fe/S biogenesis protein NfuA (191 aa).

[4Fe-4S] cluster-binding residues include Cys-149 and Cys-152.

Belongs to the NfuA family. Homodimer. It depends on [4Fe-4S] cluster as a cofactor.

Involved in iron-sulfur cluster biogenesis. Binds a 4Fe-4S cluster, can transfer this cluster to apoproteins, and thereby intervenes in the maturation of Fe/S proteins. Could also act as a scaffold/chaperone for damaged Fe/S proteins. The protein is Fe/S biogenesis protein NfuA of Pseudoalteromonas translucida (strain TAC 125).